A 289-amino-acid chain; its full sequence is ATP synthase subunit a (289 aa).

6 helical membrane-spanning segments follow: residues 43-63 (AFHL…LFIF), 103-123 (VIAP…AVDL), 160-180 (FCVF…GGFI), 193-213 (IFVQ…TLIA), 232-252 (VFIL…GLGV), and 259-279 (AVFH…LTIV).

The protein belongs to the ATPase A chain family. As to quaternary structure, F-type ATPases have 2 components, CF(1) - the catalytic core - and CF(0) - the membrane proton channel. CF(1) has five subunits: alpha(3), beta(3), gamma(1), delta(1), epsilon(1). CF(0) has three main subunits: a(1), b(2) and c(9-12). The alpha and beta chains form an alternating ring which encloses part of the gamma chain. CF(1) is attached to CF(0) by a central stalk formed by the gamma and epsilon chains, while a peripheral stalk is formed by the delta and b chains.

The protein localises to the cell inner membrane. In terms of biological role, key component of the proton channel; it plays a direct role in the translocation of protons across the membrane. The protein is ATP synthase subunit a of Pseudomonas putida (strain GB-1).